A 152-amino-acid polypeptide reads, in one-letter code: Transcriptional regulator MraZ (152 aa).

SpoVT-AbrB domains are found at residues 5-52 and 81-124; these read ASAI…PFDE and AHEC…DETA.

This sequence belongs to the MraZ family. As to quaternary structure, forms oligomers.

The protein resides in the cytoplasm. It localises to the nucleoid. The polypeptide is Transcriptional regulator MraZ (Shewanella sediminis (strain HAW-EB3)).